We begin with the raw amino-acid sequence, 89 residues long: Helix-loop-helix protein 15 (89 aa).

Residues 1 to 32 are disordered; it reads MLMEDGGLDTTSEEYRKLSKAERRKRRRATPK. Over residues 22–32 the composition is skewed to basic residues; the sequence is ERRKRRRATPK. The basic motif stretch occupies residues 32–45; sequence KYRNLHATRERIRV. Residues 32–84 form the bHLH domain; sequence KYRNLHATRERIRVESFNMAFSQLRALLPTLPVEKKLSKIEILRFSIAYISFL. The tract at residues 46-84 is helix-loop-helix motif; it reads ESFNMAFSQLRALLPTLPVEKKLSKIEILRFSIAYISFL.

In terms of tissue distribution, expressed in sensory head neurons of the lateral ganglion.

It localises to the nucleus. Functionally, transcription factor which binds the E box motif 5'-CA[TC][AG]TG-3'. Involved in modulating physiological aging, probably by regulating expression of branched-chain amino acid transferase-1, bcat-1. This chain is Helix-loop-helix protein 15, found in Caenorhabditis elegans.